The following is a 425-amino-acid chain: Serine--tRNA ligase (425 aa).

L-serine is bound at residue 229-231 (TSE). ATP is bound by residues 259–261 (RKE) and valine 275. Glutamate 282 provides a ligand contact to L-serine. 349-352 (EVTS) provides a ligand contact to ATP. Threonine 384 contributes to the L-serine binding site.

Belongs to the class-II aminoacyl-tRNA synthetase family. Type-1 seryl-tRNA synthetase subfamily. In terms of assembly, homodimer. The tRNA molecule binds across the dimer.

The protein localises to the cytoplasm. The catalysed reaction is tRNA(Ser) + L-serine + ATP = L-seryl-tRNA(Ser) + AMP + diphosphate + H(+). It carries out the reaction tRNA(Sec) + L-serine + ATP = L-seryl-tRNA(Sec) + AMP + diphosphate + H(+). It participates in aminoacyl-tRNA biosynthesis; selenocysteinyl-tRNA(Sec) biosynthesis; L-seryl-tRNA(Sec) from L-serine and tRNA(Sec): step 1/1. Functionally, catalyzes the attachment of serine to tRNA(Ser). Is also able to aminoacylate tRNA(Sec) with serine, to form the misacylated tRNA L-seryl-tRNA(Sec), which will be further converted into selenocysteinyl-tRNA(Sec). The sequence is that of Serine--tRNA ligase from Borrelia garinii subsp. bavariensis (strain ATCC BAA-2496 / DSM 23469 / PBi) (Borreliella bavariensis).